Consider the following 446-residue polypeptide: NADP-specific glutamate dehydrogenase (446 aa).

Residues K92, Q113, and K116 each contribute to the substrate site. Residue K128 is the Proton donor of the active site. G167 is a substrate binding site. NADP(+)-binding residues include T211 and N242. S379 contributes to the substrate binding site.

The protein belongs to the Glu/Leu/Phe/Val dehydrogenases family. Homohexamer.

It catalyses the reaction L-glutamate + NADP(+) + H2O = 2-oxoglutarate + NH4(+) + NADPH + H(+). Functionally, catalyzes the reversible oxidative deamination of glutamate to a-ketoglutarate and ammonia. This is NADP-specific glutamate dehydrogenase (gdhA) from Unknown prokaryotic organism.